Here is a 210-residue protein sequence, read N- to C-terminus: GRF1-interacting factor 1 (210 aa).

The span at 135–152 shows a compositional bias: low complexity; the sequence is ATLQHQQLHHSQLGMSSS. Positions 135–210 are disordered; that stretch reads ATLQHQQLHH…LYLKSSDDGN (76 aa). Residues 182-198 are compositionally biased toward gly residues; the sequence is GSGGGGEGRGGSSGDGG.

Belongs to the SS18 family. Interacts with GRF1, GRF2, GRF5 and GRF9. Strongly expressed in actively growing and developing tissues, such as roots, upper stems, and shoot tips and flower buds. Also expressed in mature flowers. Not expressed in the shoot apical meristem (SAM). Highly accumulated in the proximal part of leaf primordia, in the key proliferative zone at the junction region between the leaf blade and leaf petiole.

Transcription coactivator that plays a role in the regulation of cell expansion in leaf and cotyledons tissues. Component of a network formed by miR396, the GRFs and their interacting factors (GIFs) acting in the regulation of meristem function, at least partially through the control of cell proliferation. Appears to function synergistically with GRF1 as a transcriptional coactivator. Acts together with GRF5 for the development of appropriate leaf size and shape through the promotion and/or maintenance of cell proliferation activity in leaf primordia. Plays a role in adaxial/abaxial patterning and growth in leaf morphogenesis. GIFs are involved in the positive regulation of cell proliferation of lateral organs in a functionally redundant manner. Together with GATA18/HAN, mediates cotyledon identity by preventing ectopic root formation through the repression of PLT1 expression. This chain is GRF1-interacting factor 1, found in Arabidopsis thaliana (Mouse-ear cress).